A 135-amino-acid polypeptide reads, in one-letter code: Large ribosomal subunit protein uL16c (135 aa).

The protein belongs to the universal ribosomal protein uL16 family. As to quaternary structure, part of the 50S ribosomal subunit.

The protein resides in the plastid. Its subcellular location is the chloroplast. This chain is Large ribosomal subunit protein uL16c, found in Eucalyptus globulus subsp. globulus (Tasmanian blue gum).